We begin with the raw amino-acid sequence, 243 residues long: Cell division protein ZipA (243 aa).

The Periplasmic portion of the chain corresponds to M1–M4. A helical membrane pass occupies residues A5 to F25. Residues G26 to W243 lie on the Cytoplasmic side of the membrane. The tract at residues K30 to K89 is disordered. The segment covering R35–P50 has biased composition (basic and acidic residues).

Belongs to the ZipA family. Interacts with FtsZ via their C-terminal domains.

The protein resides in the cell inner membrane. Essential cell division protein that stabilizes the FtsZ protofilaments by cross-linking them and that serves as a cytoplasmic membrane anchor for the Z ring. Also required for the recruitment to the septal ring of downstream cell division proteins. The polypeptide is Cell division protein ZipA (Xanthomonas axonopodis pv. citri (strain 306)).